A 208-amino-acid chain; its full sequence is V-type ATP synthase subunit D (208 aa).

It belongs to the V-ATPase D subunit family.

Functionally, produces ATP from ADP in the presence of a proton gradient across the membrane. The chain is V-type ATP synthase subunit D from Chlamydia abortus (strain DSM 27085 / S26/3) (Chlamydophila abortus).